Here is a 339-residue protein sequence, read N- to C-terminus: Serpentine receptor class delta-32 (339 aa).

The next 7 membrane-spanning stretches (helical) occupy residues 14–34 (AAVV…LIFF), 45–65 (VFLA…LLTV), 94–114 (IFTT…LSMV), 128–148 (SGAF…VVSI), 188–208 (LWVA…MFWC), 237–257 (ALTV…LIFL), and 269–289 (FGYI…LVTI).

Belongs to the nematode receptor-like protein srd family.

The protein resides in the membrane. This chain is Serpentine receptor class delta-32 (srd-32), found in Caenorhabditis elegans.